A 543-amino-acid chain; its full sequence is MTPSELRRLCLIIRVFLAYGLDELIPLMRITLPLRIGRRCLFWMRNRHGDKPLGERLRLALQTLGPVWIKFGQMLSTRRDLFAPAIADQLALLQDRVAPFDGALARRQIEASLGGPLEQWFDDFDSQALASASIAQVHTATLRENGREVVLKVIRPDIQPIIRADVRLMYRLAGWVPKLLPDGRRLRPREVVREYEKTLLDELNLLREAANAIQLRRNFDASPMLYIPEVFSDYCRESVLVMERIYGVPVSDIAALRAQNTNMKLLAERGVQVFFTQVFRDSFFHADMHPGNIFVSYEHPQDPQYIGIDCGIVGSLNKADKRYLAENFIAFFNRDYRKVAELHVDSGWVPPDTNIEEFEFAIRTVCEPIFEKPLDQISFGHVLLNLFNTARRFNMEVQPQLVLLQKTLLYVEGLGRQLYPQLDLWTTAKPFLENWLHDQVGLPALMRALKAKAPYWSEKLPELPELLYDSLQQQRRLQHSMDSMTHRLGQQGSRQGRARYLFGIGATLLLSGTILTMVNIALWPIGLYVAGGVIWLAGWRYTR.

The Protein kinase domain maps to 123–501; the sequence is DFDSQALASA…GSRQGRARYL (379 aa). Residues 129-137 and Lys152 each bind ATP; that span reads LASASIAQV. Asp287 (proton acceptor) is an active-site residue. A helical transmembrane segment spans residues 517–537; sequence MVNIALWPIGLYVAGGVIWLA.

The protein belongs to the ABC1 family. UbiB subfamily.

It localises to the cell inner membrane. It functions in the pathway cofactor biosynthesis; ubiquinone biosynthesis [regulation]. Its function is as follows. Is probably a protein kinase regulator of UbiI activity which is involved in aerobic coenzyme Q (ubiquinone) biosynthesis. The protein is Probable protein kinase UbiB of Edwardsiella ictaluri (strain 93-146).